The primary structure comprises 409 residues: Glutamyl-tRNA reductase (409 aa).

Substrate is bound by residues 48-51, Ser89, 94-96, and Gln100; these read TCNR and ENE. The active-site Nucleophile is Cys49. An NADP(+)-binding site is contributed by 165–170; that stretch reads GNGMLA.

Belongs to the glutamyl-tRNA reductase family. In terms of assembly, homodimer.

The catalysed reaction is (S)-4-amino-5-oxopentanoate + tRNA(Glu) + NADP(+) = L-glutamyl-tRNA(Glu) + NADPH + H(+). The protein operates within porphyrin-containing compound metabolism; protoporphyrin-IX biosynthesis; 5-aminolevulinate from L-glutamyl-tRNA(Glu): step 1/2. Functionally, catalyzes the NADPH-dependent reduction of glutamyl-tRNA(Glu) to glutamate 1-semialdehyde (GSA). This chain is Glutamyl-tRNA reductase, found in Thermoplasma volcanium (strain ATCC 51530 / DSM 4299 / JCM 9571 / NBRC 15438 / GSS1).